The chain runs to 1137 residues: Ribonucleoside-diphosphate reductase large subunit (1137 aa).

The disordered stretch occupies residues 1-32; the sequence is MASRPAASSPVEARAPVGGQEAGGPSAATQGE. The RIP homotypic interaction motif (RHIM) signature appears at 64 to 84; sequence SYRISDNNFVQCGSNCTMIID. Disordered stretches follow at residues 124–159 and 173–315; these read GGTPRRSAGTSTGTQTADVPTEALGGPPPPPRFTLG and AVFG…YPVP. Over residues 131–141 the composition is skewed to polar residues; that stretch reads AGTSTGTQTAD. The segment covering 196-206 has biased composition (acidic residues); the sequence is SDSDDSEDTDS. A compositionally biased stretch (low complexity) spans 281–290; the sequence is AGAGLAADPA. Residues 291-304 are compositionally biased toward basic and acidic residues; it reads VARDDAEGLSDPRP. Residues T566, 581–582, G612, 791–795, and 968–972 each bind substrate; these read SC, NLCTE, and PTAAS. C582 and C808 are joined by a disulfide. N791 (proton acceptor) is an active-site residue. Residue C793 is the Cysteine radical intermediate of the active site. The active-site Proton acceptor is the E795.

This sequence belongs to the ribonucleoside diphosphate reductase large chain family. In terms of assembly, heterotetramer composed of a homodimer of the large subunit (R1) and a homodimer of the small subunit (R2). Larger multisubunit protein complex are also active, composed of (R1)n(R2)n. Self-assembles (via RIP homotypic interaction motif/RHIM) into homomeric fibrillar amyloid structures. Interacts (via RHIM) with human RIPK1 (via RHIM). Interacts (via RHIM) with human RIPK3 (via RHIM); the interaction leads to heteromeric amyloid assemblies. Interacts (via RHIM) with human ZBP1 (via RHIM); the interaction leads to heteromeric amyloid assemblies. Interacts (via C-terminus) with host CASP8.

It carries out the reaction a 2'-deoxyribonucleoside 5'-diphosphate + [thioredoxin]-disulfide + H2O = a ribonucleoside 5'-diphosphate + [thioredoxin]-dithiol. Functionally, ribonucleoside-diphosphate reductase holoenzyme that provides the precursors necessary for viral DNA synthesis. Allows virus growth in non-dividing cells, as well as reactivation from latency in infected hosts. Catalyzes the biosynthesis of deoxyribonucleotides from the corresponding ribonucleotides. Prevents host necroptosis by targeting host RIPK1 and RIPK3, thereby hampering the formation of necroptotic RIPK1-RIPK3 complexes. Forms hetero-amyloid structures with host proteins RIPK3 or ZBP1 which may prevent RIPK3- and ZBP1-mediated necroptosis. In addition, inhibits extrinsic apoptosis by targeting host CASP8. This is Ribonucleoside-diphosphate reductase large subunit from Human herpesvirus 1 (strain 17) (HHV-1).